The chain runs to 467 residues: ATP synthase subunit beta, chloroplastic (467 aa).

Position 149-156 (149-156 (GGAGVGKT)) interacts with ATP.

Belongs to the ATPase alpha/beta chains family. In terms of assembly, F-type ATPases have 2 components, CF(1) - the catalytic core - and CF(0) - the membrane proton channel. CF(1) has five subunits: alpha(3), beta(3), gamma(1), delta(1), epsilon(1). CF(0) has four main subunits: a(1), b(1), b'(1) and c(9-12).

It is found in the plastid. The protein localises to the chloroplast thylakoid membrane. It carries out the reaction ATP + H2O + 4 H(+)(in) = ADP + phosphate + 5 H(+)(out). Functionally, produces ATP from ADP in the presence of a proton gradient across the membrane. The catalytic sites are hosted primarily by the beta subunits. This Cyanidioschyzon merolae (strain NIES-3377 / 10D) (Unicellular red alga) protein is ATP synthase subunit beta, chloroplastic.